The following is a 140-amino-acid chain: Cytochrome c-type biogenesis protein CcmE (140 aa).

Residues 1–7 (MKRKHKR) are Cytoplasmic-facing. Residues 8 to 28 (LLFVLASFCAAGCALLFILSE) form a helical; Signal-anchor for type II membrane protein membrane-spanning segment. The Periplasmic segment spans residues 29–140 (LRESVSFFYT…TAPKSSPEPK (112 aa)). Positions 121 and 125 each coordinate heme.

Belongs to the CcmE/CycJ family.

It localises to the cell inner membrane. Its function is as follows. Heme chaperone required for the biogenesis of c-type cytochromes. Transiently binds heme delivered by CcmC and transfers the heme to apo-cytochromes in a process facilitated by CcmF and CcmH. The protein is Cytochrome c-type biogenesis protein CcmE of Anaplasma marginale (strain St. Maries).